The sequence spans 556 residues: Formate--tetrahydrofolate ligase (556 aa).

65 to 72 serves as a coordination point for ATP; that stretch reads TPAGEGKS.

Belongs to the formate--tetrahydrofolate ligase family.

The enzyme catalyses (6S)-5,6,7,8-tetrahydrofolate + formate + ATP = (6R)-10-formyltetrahydrofolate + ADP + phosphate. It functions in the pathway one-carbon metabolism; tetrahydrofolate interconversion. This Clostridium beijerinckii (strain ATCC 51743 / NCIMB 8052) (Clostridium acetobutylicum) protein is Formate--tetrahydrofolate ligase.